The sequence spans 114 residues: Large ribosomal subunit protein bL17 (114 aa).

It belongs to the bacterial ribosomal protein bL17 family. Part of the 50S ribosomal subunit. Contacts protein L32.

The polypeptide is Large ribosomal subunit protein bL17 (Halothermothrix orenii (strain H 168 / OCM 544 / DSM 9562)).